A 237-amino-acid polypeptide reads, in one-letter code: UPF0502 protein HEAR1280 (237 aa).

Residues 1–13 (MNTEVMHSTSTES) show a composition bias toward polar residues. Residues 1-21 (MNTEVMHSTSTESDAQEKPQA) are disordered.

The protein belongs to the UPF0502 family.

The protein is UPF0502 protein HEAR1280 of Herminiimonas arsenicoxydans.